A 151-amino-acid polypeptide reads, in one-letter code: Small ribosomal subunit protein uS15 (151 aa).

Belongs to the universal ribosomal protein uS15 family. In terms of assembly, component of the small ribosomal subunit. Part of the small subunit (SSU) processome, composed of more than 70 proteins and the RNA chaperone small nucleolar RNA (snoRNA) U3.

It is found in the cytoplasm. It localises to the nucleus. The protein resides in the nucleolus. Functionally, component of the small ribosomal subunit. The ribosome is a large ribonucleoprotein complex responsible for the synthesis of proteins in the cell. Part of the small subunit (SSU) processome, first precursor of the small eukaryotic ribosomal subunit. During the assembly of the SSU processome in the nucleolus, many ribosome biogenesis factors, an RNA chaperone and ribosomal proteins associate with the nascent pre-rRNA and work in concert to generate RNA folding, modifications, rearrangements and cleavage as well as targeted degradation of pre-ribosomal RNA by the RNA exosome. This Caenorhabditis elegans protein is Small ribosomal subunit protein uS15 (rps-13).